A 512-amino-acid chain; its full sequence is MLFPISMSATEFLLASVIFCLVFWVIRASRPQVPKGLKNPPGPWGWPLIGHMLTLGKNPHLALSRMSQQYGDVLQIRIGSTPVVVLSGLDTIRQALVRQGDDFKGRPDLYTFTLISNGQSMSFSPDSGPVWAARRRLAQNGLKSFSIASDPASSTSCYLEEHVSKEAEVLISTLQELMAGPGHFNPYRYVVVSVTNVICAICFGRRYDHNHQELLSLVNLNNNFGEVVGSGNPADFIPILRYLPNPSLNAFKDLNEKFYSFMQKMVKEHYKTFEKGHIRDITDSLIEHCQEKQLDENANVQLSDEKIINIVLDLFGAGFDTVTTAISWSLMYLVMNPRVQRKIQEELDTVIGRSRRPRLSDRSHLPYMEAFILETFRHSSFVPFTIPHSTTRDTSLKGFYIPKGRCVFVNQWQINHDQKLWVNPSEFLPERFLTPDGAIDKVLSEKVIIFGMGKRKCIGETIARWEVFLFLAILLQRVEFSVPLGVKVDMTPIYGLTMKHACCEHFQMQLRS.

The tract at residues 29 to 40 (SRPQVPKGLKNP) is mitochondrial targeting signal. Residue serine 67 is glycosylated (O-linked (GlcNAc) serine). Position 224 (phenylalanine 224) interacts with substrate. Cysteine 457 contacts heme.

It belongs to the cytochrome P450 family. Interacts with cytosolic chaperones HSP70 and HSP90; this interaction is required for initial targeting to mitochondria. Interacts (via mitochondrial targeting signal) with TOMM40 (via N-terminus); this interaction is required for translocation across the mitochondrial outer membrane. It depends on heme as a cofactor. As to expression, lung, lymphocytes and placenta.

The protein localises to the endoplasmic reticulum membrane. Its subcellular location is the mitochondrion inner membrane. It is found in the microsome membrane. It localises to the cytoplasm. It carries out the reaction an organic molecule + reduced [NADPH--hemoprotein reductase] + O2 = an alcohol + oxidized [NADPH--hemoprotein reductase] + H2O + H(+). It catalyses the reaction estrone + reduced [NADPH--hemoprotein reductase] + O2 = 2-hydroxyestrone + oxidized [NADPH--hemoprotein reductase] + H2O + H(+). The enzyme catalyses estrone + reduced [NADPH--hemoprotein reductase] + O2 = 4-hydroxyestrone + oxidized [NADPH--hemoprotein reductase] + H2O + H(+). The catalysed reaction is estrone + reduced [NADPH--hemoprotein reductase] + O2 = 6alpha-hydroxyestrone + oxidized [NADPH--hemoprotein reductase] + H2O + H(+). It carries out the reaction estrone + reduced [NADPH--hemoprotein reductase] + O2 = 15alpha-hydroxyestrone + oxidized [NADPH--hemoprotein reductase] + H2O + H(+). It catalyses the reaction estrone + reduced [NADPH--hemoprotein reductase] + O2 = 16alpha-hydroxyestrone + oxidized [NADPH--hemoprotein reductase] + H2O + H(+). The enzyme catalyses 17beta-estradiol + reduced [NADPH--hemoprotein reductase] + O2 = 2-hydroxy-17beta-estradiol + oxidized [NADPH--hemoprotein reductase] + H2O + H(+). The catalysed reaction is 17beta-estradiol + reduced [NADPH--hemoprotein reductase] + O2 = 4-hydroxy-17beta-estradiol + oxidized [NADPH--hemoprotein reductase] + H2O + H(+). It carries out the reaction 17beta-estradiol + reduced [NADPH--hemoprotein reductase] + O2 = 6alpha-hydroxy-17beta-estradiol + oxidized [NADPH--hemoprotein reductase] + H2O + H(+). It catalyses the reaction 17beta-estradiol + reduced [NADPH--hemoprotein reductase] + O2 = 7alpha-hydroxy-17beta-estradiol + oxidized [NADPH--hemoprotein reductase] + H2O + H(+). The enzyme catalyses 17beta-estradiol + reduced [NADPH--hemoprotein reductase] + O2 = 15alpha-hydroxy-17beta-estradiol + oxidized [NADPH--hemoprotein reductase] + H2O + H(+). The catalysed reaction is (5Z,8Z,11Z)-eicosatrienoate + reduced [NADPH--hemoprotein reductase] + O2 = 19-hydroxy-(5Z,8Z,11Z)-eicosatrienoate + oxidized [NADPH--hemoprotein reductase] + H2O + H(+). It carries out the reaction (5Z,8Z,11Z,14Z)-eicosatetraenoate + reduced [NADPH--hemoprotein reductase] + O2 = 16-hydroxy-(5Z,8Z,11Z,14Z)-eicosatetraenoate + oxidized [NADPH--hemoprotein reductase] + H2O + H(+). It catalyses the reaction (5Z,8Z,11Z,14Z)-eicosatetraenoate + reduced [NADPH--hemoprotein reductase] + O2 = 17-hydroxy-(5Z,8Z,11Z,14Z)-eicosatetraenoate + oxidized [NADPH--hemoprotein reductase] + H2O + H(+). The enzyme catalyses (5Z,8Z,11Z,14Z)-eicosatetraenoate + reduced [NADPH--hemoprotein reductase] + O2 = 18-hydroxy-(5Z,8Z,11Z,14Z)-eicosatetraenoate + oxidized [NADPH--hemoprotein reductase] + H2O + H(+). The catalysed reaction is (5Z,8Z,11Z,14Z)-eicosatetraenoate + reduced [NADPH--hemoprotein reductase] + O2 = 19-hydroxy-(5Z,8Z,11Z,14Z)-eicosatetraenoate + oxidized [NADPH--hemoprotein reductase] + H2O + H(+). It carries out the reaction (5Z,8Z,11Z,14Z,17Z)-eicosapentaenoate + reduced [NADPH--hemoprotein reductase] + O2 = 19-hydroxy-(5Z,8Z,11Z,14Z,17Z)-eicosapentaenoate + oxidized [NADPH--hemoprotein reductase] + H2O + H(+). It catalyses the reaction (5Z,8Z,11Z,14Z)-eicosatetraenoate + reduced [NADPH--hemoprotein reductase] + O2 = (8R,9S)-epoxy-(5Z,11Z,14Z)-eicosatrienoate + oxidized [NADPH--hemoprotein reductase] + H2O + H(+). The enzyme catalyses (5Z,8Z,11Z,14Z)-eicosatetraenoate + reduced [NADPH--hemoprotein reductase] + O2 = (11R,12S)-epoxy-(5Z,8Z,14Z)-eicosatrienoate + oxidized [NADPH--hemoprotein reductase] + H2O + H(+). The catalysed reaction is (5Z,8Z,11Z,14Z)-eicosatetraenoate + reduced [NADPH--hemoprotein reductase] + O2 = (14S,15R)-epoxy-(5Z,8Z,11Z)-eicosatrienoate + oxidized [NADPH--hemoprotein reductase] + H2O + H(+). It carries out the reaction (5Z,8Z,11Z,14Z)-eicosatetraenoate + reduced [NADPH--hemoprotein reductase] + O2 = (14R,15S)-epoxy-(5Z,8Z,11Z)-eicosatrienoate + oxidized [NADPH--hemoprotein reductase] + H2O + H(+). It catalyses the reaction (5Z,8Z,11Z,14Z,17Z)-eicosapentaenoate + reduced [NADPH--hemoprotein reductase] + O2 = (17R,18S)-epoxy-(5Z,8Z,11Z,14Z)-eicosatetraenoate + oxidized [NADPH--hemoprotein reductase] + H2O + H(+). The enzyme catalyses (4Z,7Z,10Z,13Z,16Z,19Z)-docosahexaenoate + reduced [NADPH--hemoprotein reductase] + O2 = (19S,20R)-epoxy-(4Z,7Z,10Z,13Z,16Z)-docosapentaenoate + oxidized [NADPH--hemoprotein reductase] + H2O + H(+). The catalysed reaction is (4Z,7Z,10Z,13Z,16Z,19Z)-docosahexaenoate + reduced [NADPH--hemoprotein reductase] + O2 = (19R,20S)-epoxy-(4Z,7Z,10Z,13Z,16Z)-docosapentaenoate + oxidized [NADPH--hemoprotein reductase] + H2O + H(+). It carries out the reaction all-trans-retinol + reduced [NADPH--hemoprotein reductase] + O2 = all-trans-retinal + oxidized [NADPH--hemoprotein reductase] + 2 H2O + H(+). It catalyses the reaction all-trans-retinal + reduced [NADPH--hemoprotein reductase] + O2 = all-trans-retinoate + oxidized [NADPH--hemoprotein reductase] + H2O + 2 H(+). The enzyme catalyses (13S)-hydroperoxy-(9Z,11E)-octadecadienoate = 13-oxo-(9Z,11E)-octadecadienoate + H2O. The catalysed reaction is (12S)-hydroperoxy-(5Z,8Z,10E,14Z)-eicosatetraenoate = 12-oxo-(5Z,8Z,10E,14Z)-eicosatetraenoate + H2O. It carries out the reaction (15S)-hydroperoxy-(5Z,8Z,11Z,13E)-eicosatetraenoate = 15-oxo-(5Z,8Z,11Z,13E)-eicosatetraenoate + H2O. It catalyses the reaction (5S)-hydroperoxy-(6E,8Z,11Z,14Z)-eicosatetraenoate = 5-oxo-(6E,8Z,11Z,14Z)-eicosatetraenoate + H2O. The protein operates within steroid hormone biosynthesis. It functions in the pathway lipid metabolism; fatty acid metabolism. Its pathway is cofactor metabolism; retinol metabolism. Its function is as follows. A cytochrome P450 monooxygenase involved in the metabolism of various endogenous substrates, including fatty acids, steroid hormones and vitamins. Mechanistically, uses molecular oxygen inserting one oxygen atom into a substrate, and reducing the second into a water molecule, with two electrons provided by NADPH via cytochrome P450 reductase (NADPH--hemoprotein reductase). Catalyzes the hydroxylation of carbon-hydrogen bonds. Exhibits high catalytic activity for the formation of hydroxyestrogens from estrone (E1) and 17beta-estradiol (E2), namely 2-hydroxy E1 and E2, as well as D-ring hydroxylated E1 and E2 at the C15-alpha and C16-alpha positions. Displays different regioselectivities for polyunsaturated fatty acids (PUFA) hydroxylation. Catalyzes the epoxidation of double bonds of certain PUFA. Converts arachidonic acid toward epoxyeicosatrienoic acid (EET) regioisomers, 8,9-, 11,12-, and 14,15-EET, that function as lipid mediators in the vascular system. Displays an absolute stereoselectivity in the epoxidation of eicosapentaenoic acid (EPA) producing the 17(R),18(S) enantiomer. May play an important role in all-trans retinoic acid biosynthesis in extrahepatic tissues. Catalyzes two successive oxidative transformation of all-trans retinol to all-trans retinal and then to the active form all-trans retinoic acid. May also participate in eicosanoids metabolism by converting hydroperoxide species into oxo metabolites (lipoxygenase-like reaction, NADPH-independent). The sequence is that of Cytochrome P450 1A1 from Homo sapiens (Human).